The sequence spans 279 residues: Pantothenate synthetase (279 aa).

27 to 34 (MGYLHEGH) lines the ATP pocket. H34 serves as the catalytic Proton donor. Residue Q58 coordinates (R)-pantoate. Q58 lines the beta-alanine pocket. Position 144 to 147 (144 to 147 (GKKD)) interacts with ATP. Q150 lines the (R)-pantoate pocket. ATP is bound by residues V173 and 181-184 (MSSR).

This sequence belongs to the pantothenate synthetase family. As to quaternary structure, homodimer.

It is found in the cytoplasm. It catalyses the reaction (R)-pantoate + beta-alanine + ATP = (R)-pantothenate + AMP + diphosphate + H(+). The protein operates within cofactor biosynthesis; (R)-pantothenate biosynthesis; (R)-pantothenate from (R)-pantoate and beta-alanine: step 1/1. Functionally, catalyzes the condensation of pantoate with beta-alanine in an ATP-dependent reaction via a pantoyl-adenylate intermediate. In Citrifermentans bemidjiense (strain ATCC BAA-1014 / DSM 16622 / JCM 12645 / Bem) (Geobacter bemidjiensis), this protein is Pantothenate synthetase.